We begin with the raw amino-acid sequence, 7119 residues long: Replicase polyprotein 1ab (7119 aa).

Positions 25 to 151 (RSDHVACTVP…EYTFLLRKNG (127 aa)) constitute a CoV Nsp1 globular domain. The BetaCoV Nsp1 C-terminal domain maps to 167–195 (TPYVEILDDLEADPTGKYSQNLLKKLIGG). A CoV Nsp2 N-terminal domain is found at 197–472 (CIPIDQYMCG…WDKVVETANL (276 aa)). The Zn(2+) site is built by Cys-339, Cys-342, Cys-358, and Cys-360. The tract at residues 339–360 (CNACGRGTWCTGNAIQGFACDC) is C4. Positions 478–712 (QRSLNFCQQF…LDIMSKAMKL (235 aa)) constitute a CoV Nsp2 middle domain. The CoV Nsp2 C-terminal domain maps to 714–847 (HTNVSWAGTK…VSTLFRLKGG (134 aa)). The Ubiquitin-like 1 domain maps to 851 to 960 (KKVTFGDVNT…MTFSINPVED (110 aa)). 2 Macro domains span residues 1152–1321 (DLSK…KPDG) and 1322–1446 (LVYS…AIQT). Residues 1446-1519 (TPETAFINNV…LEACRAYLTS (74 aa)) enclose the DPUP domain. One can recognise a Ubiquitin-like 2 domain in the interval 1524–1579 (QVNIEVLVTIDGVNFRTVILNDTTTFRKQLGATFYKGVDISDAFPTVKMGGESLFV). The Peptidase C16 domain occupies 1593–1864 (EYYGTSDVTF…KVEVNPDLSN (272 aa)). Cys-1634 (for PL-PRO activity) is an active-site residue. Positions 1714, 1717, 1749, and 1751 each coordinate Zn(2+). Residues 1714 to 1751 (CTVCGIRDIEYTGMRACVYAGVNSMEELQSVFNETCVC) form a C4-type zinc finger. Active-site for PL-PRO activity residues include His-1800 and Asp-1815. The Nucleic acid-binding domain occupies 1878–1995 (TIKYSPATIL…QLYDVAPIVL (118 aa)). Positions 2012–2133 (HNVPVVDDVP…AKITVTATTA (122 aa)) constitute a G2M domain. The next 3 helical transmembrane spans lie at 2112–2132 (VLLG…TATT), 2145–2165 (FVVN…LFFL), and 2222–2242 (LFLL…LVLF). An HD1 region spans residues 2112–2395 (VLLGASSLFA…VTHIPLHGLV (284 aa)). A 3Ecto domain is found at 2259-2325 (LAIYKEVRSY…LQMLQTHITS (67 aa)). 2 disulfide bridges follow: Cys-2275–Cys-2303 and Cys-2293–Cys-2300. 3 helical membrane passes run 2326–2346 (YVLN…YVLY), 2350–2370 (FNVL…SAFV), and 2375–2395 (YNYI…HGLV). The Y1 stretch occupies residues 2409–2499 (KFYSHVINGC…TLRRLIKPTD (91 aa)). One can recognise a CoV Nsp3 Y domain in the interval 2409-2782 (KFYSHVINGC…LSVKFSATKI (374 aa)). His-2413, Cys-2418, Cys-2423, Cys-2426, Cys-2459, His-2462, Cys-2466, and Cys-2469 together coordinate Zn(2+). Residues 2413-2426 (HVINGCKDTACLLC) are ZF1. A ZF2 region spans residues 2459-2469 (CCKHNWNCVEC). The segment at 2500-2598 (QSHYYVDSVV…LVDVNLVTTV (99 aa)) is Y2. The tract at residues 2500 to 2782 (QSHYYVDSVV…LSVKFSATKI (283 aa)) is coV-Y. The Y3 stretch occupies residues 2599 to 2681 (GDSREIAIKM…DALQYAHKND (83 aa)). Residues 2682-2782 (IQLTTECYNN…LSVKFSATKI (101 aa)) form a Y4 region. A run of 4 helical transmembrane segments spans residues 2800–2820 (GYCI…FCLP), 3072–3092 (STSL…FYYI), 3105–3125 (CAVV…FIVA), and 3149–3169 (AFIM…IWML). Residues 2800–3169 (GYCILTLFVF…FGAVVPIWML (370 aa)) are HD2. Residues 3195–3291 (VFTDGKLNCS…NCSVTSSVLQ (97 aa)) form the Nsp4C domain. Positions 3292–3597 (SGLVKMSAPS…NMQVMGVVMQ (306 aa)) constitute a Peptidase C30 domain. Catalysis depends on for 3CL-PRO activity residues His-3332 and Cys-3439. 7 helical membrane passes run 3603–3623 (ISYG…VSVM), 3637–3657 (TIPT…MFTV), 3662–3682 (TFMS…NIVY), 3707–3727 (RTTH…AIIV), 3735–3755 (MSNL…YVIG), 3784–3804 (LAKF…FILP), and 3808–3828 (LVLL…GVFS). An HD3 region spans residues 3603–3828 (ISYGFIHWLI…MCTMYFGVFS (226 aa)). In terms of domain architecture, RdRp Nsp7 cofactor spans 3890-3972 (SKLTDLKCTS…DLFENSSVLQ (83 aa)). A RdRp Nsp8 cofactor domain is found at 3973–4171 (ATLTEFSHLA…RSSSSAVKLQ (199 aa)). The Nsp9 ssRNA-binding domain maps to 4172 to 4281 (NNEIHPKGLK…GHIAATVRLQ (110 aa)). In terms of domain architecture, ExoN/MTase coactivator spans 4282–4420 (AGANTEFASN…DALRNNTVPQ (139 aa)). Residues Cys-4355, Cys-4358, His-4364, Cys-4371, Cys-4397, Cys-4400, Cys-4408, and Cys-4410 each coordinate Zn(2+). Zinc fingers lie at residues 4355-4371 (CLYC…SGVC) and 4397-4410 (CNVC…GCNC). One can recognise a NiRAN domain in the interval 4426–4683 (FLNRVRGSSV…AAETHKDCDF (258 aa)). 2 residues coordinate Mn(2+): Asn-4631 and Asp-4640. Residues 4688-4786 (IEWPLLEYDY…MNMDFNIHRH (99 aa)) enclose the Nsp12 Interface domain. Positions 4717, 4723, 4728, 4732, and 4909 each coordinate Zn(2+). The Nsp12 RNA-dependent RNA polymerase domain occupies 4787–5354 (RLALKELMMY…DLYSSPTTLQ (568 aa)). Residues 4789–5003 (ALKELMMYAA…HQKMLKSMAA (215 aa)) form a rdRp Fingers N-ter region. The interval 5004-5042 (TRGATCVIGTTKFYGGWDFMLKTLYKDVESPHLMGWDYP) is rdRp Palm N-ter. Residues 5034-5196 (PHLMGWDYPK…CYNSDYAAKG (163 aa)) enclose the RdRp catalytic domain. The tract at residues 5043–5101 (KCDRAMPNMCRILASLILARKHSTCCTNSDRFYRLANECAQVLSEYVLCGGGYYVKPGG) is rdRp Fingers C-ter. 3 residues coordinate Zn(2+): His-5064, Cys-5067, and Cys-5068. A rdRp Palm C-ter region spans residues 5102-5237 (TSSGDATTAY…EKGPHEFCSQ (136 aa)). Residues Ser-5181, Asp-5182, and Asp-5183 contribute to the active site. Residues 5238–5354 (HTLYIKDGDD…DLYSSPTTLQ (117 aa)) form a rdRp Thumb region. The CV ZBD domain occupies 5355–5467 (AVGSCVVCHS…MEFNRLATCD (113 aa)). 12 residues coordinate Zn(2+): Cys-5359, Cys-5362, Cys-5370, Cys-5373, Cys-5380, Cys-5383, His-5387, His-5393, Cys-5404, Cys-5409, Cys-5426, and His-5429. Residues 5611 to 5792 (TVPEEFANHV…MCNLGPDIFL (182 aa)) enclose the (+)RNA virus helicase ATP-binding domain. Residue 5636–5643 (GPPGTGKS) coordinates ATP. The (+)RNA virus helicase C-terminal domain maps to 5793 to 5967 (SVCYRCPKEI…GLFKDCSRED (175 aa)). The region spanning 6024–6239 (LFITRDEAIR…RCLAIYDCFI (216 aa)) is the ExoN domain. Active-site residues include Asp-6042, Glu-6044, and Glu-6143. Cys-6159, Cys-6162, Cys-6178, His-6181, His-6209, Cys-6213, and His-6216 together coordinate Zn(2+). Active-site residues include His-6220 and Asp-6225. Position 6231 (Cys-6231) interacts with Zn(2+). Positions 6248–6475 (YPYISHEQKL…NLWSTFVKVQ (228 aa)) constitute an N7-MTase domain. Residue 6283–6289 (DIGNPKG) coordinates S-adenosyl-L-methionine. Residues 6361–6375 (CNGGSLYVNKHAFHT) form a gpppA-binding region. The Zn(2+) site is built by Cys-6399, Cys-6421, Cys-6432, and His-6435. The Nsp15 N-terminal oligomerization domain occupies 6476–6536 (GLENIAFNVI…NVAFELYAKR (61 aa)). One can recognise an AV-Nsp11N/CoV-Nsp15M domain in the interval 6537–6658 (AVRSHPDLNL…LYKKVNNEFV (122 aa)). The NendoU domain occupies 6675–6814 (TVLTPMEEDF…RDGKVQTFYP (140 aa)). Residues His-6705, His-6720, Lys-6760, Lys-6863, Asp-6947, Lys-6987, and Glu-7020 contribute to the active site. One can recognise a Nidovirus-type SAM-dependent 2'-O-MTase domain in the interval 6819–7113 (TNDWKPGLTM…TLNVSTDVLV (295 aa)).

Belongs to the coronaviruses polyprotein 1ab family. In terms of assembly, interacts with host PHB and PHB2. As to quaternary structure, interacts with papain-like protease nsp3 and non-structural protein 6. Monomer. Homodimer. Only the homodimer shows catalytic activity. In terms of assembly, interacts with nsp8 and nsp12 to form the replication-transcription complex (RTC): nsp12, nsp7, two subunits of nsp8, and up to two subunits of nsp13. As to quaternary structure, interacts with nsp7, nsp13 and nsp12 to form the replication-transcription complex (RTC): nsp12, nsp7, two subunits of nsp8, and up to two subunits of nsp13. Interacts with nsp12. In terms of assembly, interacts with proofreading exoribonuclease nsp14 and 2'-O-methyltransferase nsp16; these interactions enhance nsp14 and nsp16 enzymatic activities. As to quaternary structure, interacts with nsp7 and nsp8 to form the replication-transcription complex (RTC): nsp12, nsp7, two subunits of nsp8, and up to two subunits of nsp13. Interacts with nsp9. Interacts with nsp8 to form the replication-transcription complex (RTC): nsp12, nsp7, two subunits of nsp8, and up to two subunits of nsp13. Mn(2+) is required as a cofactor. Mg(2+) serves as cofactor. Post-translationally, specific enzymatic cleavages in vivo by its own proteases yield mature proteins. 3CL-PRO and PL-PRO proteinases are autocatalytically processed.

Its subcellular location is the host membrane. It localises to the host cytoplasm. The protein localises to the host perinuclear region. It is found in the host endoplasmic reticulum-Golgi intermediate compartment. It carries out the reaction RNA(n) + a ribonucleoside 5'-triphosphate = RNA(n+1) + diphosphate. The enzyme catalyses ATP + H2O = ADP + phosphate + H(+). The catalysed reaction is Thiol-dependent hydrolysis of ester, thioester, amide, peptide and isopeptide bonds formed by the C-terminal Gly of ubiquitin (a 76-residue protein attached to proteins as an intracellular targeting signal).. It catalyses the reaction a 5'-end (N(7)-methyl 5'-triphosphoguanosine)-ribonucleoside in mRNA + S-adenosyl-L-methionine = a 5'-end (N(7)-methyl 5'-triphosphoguanosine)-(2'-O-methyl-ribonucleoside) in mRNA + S-adenosyl-L-homocysteine + H(+). It carries out the reaction uridylyl-uridylyl-ribonucleotide-RNA = a 3'-end uridylyl-2',3'-cyclophospho-uridine-RNA + a 5'-end dephospho-ribonucleoside-RNA. The enzyme catalyses a 5'-end diphospho-ribonucleoside in mRNA + GTP + H(+) = a 5'-end (5'-triphosphoguanosine)-ribonucleoside in mRNA + diphosphate. The catalysed reaction is a 5'-end (5'-triphosphoguanosine)-ribonucleoside in mRNA + S-adenosyl-L-methionine = a 5'-end (N(7)-methyl 5'-triphosphoguanosine)-ribonucleoside in mRNA + S-adenosyl-L-homocysteine. The replicase polyprotein of coronaviruses is a multifunctional protein: it contains the activities necessary for the transcription of negative stranded RNA, leader RNA, subgenomic mRNAs and progeny virion RNA as well as proteinases responsible for the cleavage of the polyprotein into functional products. In terms of biological role, inhibits host translation by interacting with the 40S ribosomal subunit. The nsp1-40S ribosome complex further induces an endonucleolytic cleavage near the 5'UTR of host mRNAs, targeting them for degradation. Viral mRNAs are not susceptible to nsp1-mediated endonucleolytic RNA cleavage thanks to the presence of a 5'-end leader sequence and are therefore protected from degradation. By suppressing host gene expression, nsp1 facilitates efficient viral gene expression in infected cells and evasion from host immune response. Its function is as follows. May play a role in the modulation of host cell survival signaling pathway by interacting with host PHB and PHB2. Indeed, these two proteins play a role in maintaining the functional integrity of the mitochondria and protecting cells from various stresses. Functionally, responsible for the cleavages located at the N-terminus of the replicase polyprotein. In addition, PL-PRO possesses a deubiquitinating/deISGylating activity and processes both 'Lys-48'- and 'Lys-63'-linked polyubiquitin chains from cellular substrates. Participates together with nsp4 in the assembly of virally-induced cytoplasmic double-membrane vesicles necessary for viral replication. Antagonizes innate immune induction of type I interferon by blocking the phosphorylation, dimerization and subsequent nuclear translocation of host IRF3. Also prevents host NF-kappa-B signaling. Participates in the assembly of virally-induced cytoplasmic double-membrane vesicles necessary for viral replication. In terms of biological role, cleaves the C-terminus of replicase polyprotein at 11 sites. Recognizes substrates containing the core sequence [ILMVF]-Q-|-[SGACN]. Also able to bind an ADP-ribose-1''-phosphate (ADRP). Its function is as follows. Plays a role in the initial induction of autophagosomes from host endoplasmic reticulum. Later, limits the expansion of these phagosomes that are no longer able to deliver viral components to lysosomes. Functionally, forms a hexadecamer with nsp8 (8 subunits of each) that may participate in viral replication by acting as a primase. Alternatively, may synthesize substantially longer products than oligonucleotide primers. Forms a hexadecamer with nsp7 (8 subunits of each) that may participate in viral replication by acting as a primase. Alternatively, may synthesize substantially longer products than oligonucleotide primers. In terms of biological role, forms a primer, NSP9-pU, which is utilized by the polymerase for the initiation of RNA chains. Interacts with ribosome signal recognition particle RNA (SRP). Together with NSP8, suppress protein integration into the cell membrane, thereby disrupting host immune defenses. Its function is as follows. Plays a pivotal role in viral transcription by stimulating both nsp14 3'-5' exoribonuclease and nsp16 2'-O-methyltransferase activities. Therefore plays an essential role in viral mRNAs cap methylation. Functionally, RNA-directed RNA polymerase that catalyzes the transcription of viral genomic and subgenomic RNAs. Acts in complex with nsp7 and nsp8 to transcribe both the minus and positive strands of genomic RNA. The kinase-like NiRAN domain of NSP12 attaches one or more nucleotides to the amino terminus of NSP9, forming a covalent RNA-protein intermediate that serves as transcription/replication primer. Subgenomic RNAs (sgRNAs) are formed by discontinuous transcription: The polymerase has the ability to pause at transcription-regulating sequences (TRS) and jump to the leader TRS, resulting in a major deletion. This creates a series of subgenomic RNAs that are replicated, transcribed and translated. In addition, Nsp12 is a subunit of the viral RNA capping enzyme that catalyzes the RNA guanylyltransferase reaction for genomic and sub-genomic RNAs. Subsequently, the NiRAN domain transfers RNA to GDP, and forms the core cap structure GpppA-RNA. RNA-directed RNA polymerase that catalyzes the transcription of viral genomic and subgenomic RNAs. Acts in complex with nsp7 and nsp8 to transcribe both the minus and positive strands of genomic RNA. Subgenomic RNAs (sgRNAs) are formed by discontinuous transcription: The polymerase has the ability to pause at transcription-regulating sequences (TRS) and jump to the leader TRS, resulting in a major deletion. This creates a series of subgenomic RNAs that are replicated, transcribed and translated. In addition, Nsp12 is a subunit of the viral RNA capping enzyme that catalyzes the RNA guanylyltransferase reaction for genomic and sub-genomic RNAs. The kinase-like NiRAN domain of NSP12 transfers RNA to the amino terminus of NSP9, forming a covalent RNA-protein intermediate. Subsequently, the NiRAN domain transfers RNA to GDP, and forms the core cap structure GpppA-RNA. In terms of biological role, multi-functional protein with a zinc-binding domain in N-terminus displaying RNA and DNA duplex-unwinding activities with 5' to 3' polarity. Activity of helicase is dependent on magnesium. Its function is as follows. Plays a role in viral RNA synthesis through two distinct activities. The N7-guanine methyltransferase activity plays a role in the formation of the cap structure GpppA-RNA. The proofreading exoribonuclease reduces the sensitivity of the virus to RNA mutagens during replication. This activity acts on both ssRNA and dsRNA in a 3'-5' direction. Functionally, plays a role in viral transcription/replication and prevents the simultaneous activation of host cell dsRNA sensors, such as MDA5/IFIH1, OAS, and PKR. Acts by degrading the 5'-polyuridines generated during replication of the poly(A) region of viral genomic and subgenomic RNAs. Catalyzes a two-step reaction in which a 2'3'-cyclic phosphate (2'3'-cP) is first generated by 2'-O transesterification, which is then hydrolyzed to a 3'-phosphate (3'-P). If not degraded, poly(U) RNA would hybridize with poly(A) RNA tails and activate host dsRNA sensors. Methyltransferase that mediates mRNA cap 2'-O-ribose methylation to the 5'-cap structure of viral mRNAs. N7-methyl guanosine cap is a prerequisite for binding of nsp16. Therefore plays an essential role in viral mRNAs cap methylation which is essential to evade immune system. This chain is Replicase polyprotein 1ab (rep), found in Tylonycteris pachypus (Lesser bamboo bat).